The primary structure comprises 90 residues: Putative regulatory protein Cbei_1140 (90 aa).

The protein belongs to the RemA family.

This chain is Putative regulatory protein Cbei_1140, found in Clostridium beijerinckii (strain ATCC 51743 / NCIMB 8052) (Clostridium acetobutylicum).